Reading from the N-terminus, the 361-residue chain is Diacylglycerol O-acyltransferase 2 (361 aa).

The Cytoplasmic portion of the chain corresponds to 1-42 (MKTIIAAYSGVLRGTGSSLLSAVHDLPSIPWLSKSSVVRHLQ). The helical transmembrane segment at 43–61 (IISVLQWVLSFLILGVACT) threads the bilayer. At 62–65 (AVLV) the chain is on the lumenal side. A helical transmembrane segment spans residues 66-85 (YIFCTDLWLIAALYFTWMVL). Residues 86-361 (DWNTPYKGGR…LPDSETLEFI (276 aa)) are Cytoplasmic-facing.

The protein belongs to the diacylglycerol acyltransferase family.

Its subcellular location is the endoplasmic reticulum membrane. It is found in the lipid droplet. The protein resides in the cytoplasm. It localises to the perinuclear region. The enzyme catalyses an acyl-CoA + a 1,2-diacyl-sn-glycerol = a triacyl-sn-glycerol + CoA. It carries out the reaction all-trans-retinol + an acyl-CoA = an all-trans-retinyl ester + CoA. The catalysed reaction is 2-(9Z-octadecenoyl)-glycerol + (9Z)-octadecenoyl-CoA = 1,2-di-(9Z-octadecenoyl)-sn-glycerol + CoA. It catalyses the reaction 1,2-di-(9Z-octadecenoyl)-sn-glycerol + (9Z)-octadecenoyl-CoA = 1,2,3-tri-(9Z-octadecenoyl)-glycerol + CoA. The enzyme catalyses all-trans-retinol + hexadecanoyl-CoA = all-trans-retinyl hexadecanoate + CoA. It carries out the reaction 1-O-(9Z-octadecenyl)-glycerol + (9Z)-octadecenoyl-CoA = 1-O-(9Z-octadecyl)-3-(9Z-octadecenoyl)-glycerol + CoA. The catalysed reaction is 1-(9Z-octadecenoyl)-glycerol + (9Z)-octadecenoyl-CoA = 1,2-di-(9Z-octadecenoyl)-glycerol + CoA. It catalyses the reaction 1,2-di-(9Z-octadecenoyl)-sn-glycerol + hexadecanoyl-CoA = 1,2-di-(9Z)-octadecenoyl-3-hexadecanoyl-sn-glycerol + CoA. The enzyme catalyses 1,3-di-(9Z-octadecenoyl)-glycerol + (9Z)-octadecenoyl-CoA = 1,2,3-tri-(9Z-octadecenoyl)-glycerol + CoA. It carries out the reaction 2,3-di-(9Z)-octadecenoyl-sn-glycerol + (9Z)-octadecenoyl-CoA = 1,2,3-tri-(9Z-octadecenoyl)-glycerol + CoA. The catalysed reaction is 2-(9Z-octadecenoyl)-glycerol + hexadecanoyl-CoA = 1-hexadecanoyl-2-(9Z-octadecenoyl)-sn-glycerol + CoA. It functions in the pathway glycerolipid metabolism; triacylglycerol biosynthesis. Its function is as follows. Essential acyltransferase that catalyzes the terminal and only committed step in triacylglycerol synthesis by using diacylglycerol and fatty acyl CoA as substrates. Required for synthesis and storage of intracellular triglycerides. Probably plays a central role in cytosolic lipid accumulation. The chain is Diacylglycerol O-acyltransferase 2 (dgat2) from Xenopus laevis (African clawed frog).